A 450-amino-acid polypeptide reads, in one-letter code: Guanine deaminase (450 aa).

Histidine 88 and histidine 90 together coordinate Zn(2+). Substrate is bound by residues 90–93, 218–219, 245–248, and aspartate 335; these read HAPQ, RF, and HLSE. Histidine 245 and aspartate 335 together coordinate Zn(2+).

The protein belongs to the metallo-dependent hydrolases superfamily. ATZ/TRZ family. The cofactor is Zn(2+).

It carries out the reaction guanine + H2O + H(+) = xanthine + NH4(+). The protein operates within purine metabolism; guanine degradation; xanthine from guanine: step 1/1. Catalyzes the hydrolytic deamination of guanine, producing xanthine and ammonia. This is Guanine deaminase (guaD) from Dictyostelium discoideum (Social amoeba).